A 59-amino-acid polypeptide reads, in one-letter code: uncharacterized protein (59 aa).

Residues 27 to 59 (SCFQNRPPEPASFQNLRPEPASLQNLRTEPTSF) form a disordered region. The segment covering 48–59 (SLQNLRTEPTSF) has biased composition (polar residues).

This is an uncharacterized protein from Homo sapiens (Human).